An 84-amino-acid chain; its full sequence is MKFMVEVRIRLKKGMLNPEAATIERALALLGYEVEDTDTTDVITFTMDEDSLEAVEREVEDMCQRLLCNPVIHDYDVSINEMEG.

It belongs to the PurS family. As to quaternary structure, homodimer. Part of the FGAM synthase complex composed of 1 PurL, 1 PurQ and 2 PurS subunits.

The protein resides in the cytoplasm. The catalysed reaction is N(2)-formyl-N(1)-(5-phospho-beta-D-ribosyl)glycinamide + L-glutamine + ATP + H2O = 2-formamido-N(1)-(5-O-phospho-beta-D-ribosyl)acetamidine + L-glutamate + ADP + phosphate + H(+). The protein operates within purine metabolism; IMP biosynthesis via de novo pathway; 5-amino-1-(5-phospho-D-ribosyl)imidazole from N(2)-formyl-N(1)-(5-phospho-D-ribosyl)glycinamide: step 1/2. In terms of biological role, part of the phosphoribosylformylglycinamidine synthase complex involved in the purines biosynthetic pathway. Catalyzes the ATP-dependent conversion of formylglycinamide ribonucleotide (FGAR) and glutamine to yield formylglycinamidine ribonucleotide (FGAM) and glutamate. The FGAM synthase complex is composed of three subunits. PurQ produces an ammonia molecule by converting glutamine to glutamate. PurL transfers the ammonia molecule to FGAR to form FGAM in an ATP-dependent manner. PurS interacts with PurQ and PurL and is thought to assist in the transfer of the ammonia molecule from PurQ to PurL. This is Phosphoribosylformylglycinamidine synthase subunit PurS from Methanothermobacter thermautotrophicus (strain ATCC 29096 / DSM 1053 / JCM 10044 / NBRC 100330 / Delta H) (Methanobacterium thermoautotrophicum).